A 369-amino-acid polypeptide reads, in one-letter code: Protein RecA (369 aa).

77–84 (GPESSGKT) is a binding site for ATP.

Belongs to the RecA family.

It localises to the cytoplasm. In terms of biological role, can catalyze the hydrolysis of ATP in the presence of single-stranded DNA, the ATP-dependent uptake of single-stranded DNA by duplex DNA, and the ATP-dependent hybridization of homologous single-stranded DNAs. It interacts with LexA causing its activation and leading to its autocatalytic cleavage. The polypeptide is Protein RecA (Corynebacterium pseudotuberculosis (strain C231)).